The chain runs to 341 residues: UDP-3-O-acylglucosamine N-acyltransferase (341 aa).

The active-site Proton acceptor is His241.

It belongs to the transferase hexapeptide repeat family. LpxD subfamily. In terms of assembly, homotrimer.

It carries out the reaction a UDP-3-O-[(3R)-3-hydroxyacyl]-alpha-D-glucosamine + a (3R)-hydroxyacyl-[ACP] = a UDP-2-N,3-O-bis[(3R)-3-hydroxyacyl]-alpha-D-glucosamine + holo-[ACP] + H(+). It functions in the pathway bacterial outer membrane biogenesis; LPS lipid A biosynthesis. Catalyzes the N-acylation of UDP-3-O-acylglucosamine using 3-hydroxyacyl-ACP as the acyl donor. Is involved in the biosynthesis of lipid A, a phosphorylated glycolipid that anchors the lipopolysaccharide to the outer membrane of the cell. The polypeptide is UDP-3-O-acylglucosamine N-acyltransferase (Mannheimia succiniciproducens (strain KCTC 0769BP / MBEL55E)).